Reading from the N-terminus, the 385-residue chain is Methionyl-tRNA formyltransferase, mitochondrial (385 aa).

This sequence belongs to the Fmt family.

Its subcellular location is the mitochondrion. It catalyses the reaction L-methionyl-tRNA(fMet) + (6R)-10-formyltetrahydrofolate = N-formyl-L-methionyl-tRNA(fMet) + (6S)-5,6,7,8-tetrahydrofolate + H(+). Functionally, methionyl-tRNA formyltransferase that formylates methionyl-tRNA in mitochondria and is crucial for translation initiation. This is Methionyl-tRNA formyltransferase, mitochondrial (Mtfmt) from Rattus norvegicus (Rat).